The chain runs to 933 residues: Isoleucine--tRNA ligase (933 aa).

The short motif at 57 to 67 is the 'HIGH' region element; the sequence is PYANGNIHMGH. E556 contacts L-isoleucyl-5'-AMP. The short motif at 597–601 is the 'KMSKS' region element; the sequence is KMSKS. K600 serves as a coordination point for ATP. Positions 891, 894, 911, and 914 each coordinate Zn(2+).

The protein belongs to the class-I aminoacyl-tRNA synthetase family. IleS type 1 subfamily. In terms of assembly, monomer. The cofactor is Zn(2+).

Its subcellular location is the cytoplasm. The enzyme catalyses tRNA(Ile) + L-isoleucine + ATP = L-isoleucyl-tRNA(Ile) + AMP + diphosphate. In terms of biological role, catalyzes the attachment of isoleucine to tRNA(Ile). As IleRS can inadvertently accommodate and process structurally similar amino acids such as valine, to avoid such errors it has two additional distinct tRNA(Ile)-dependent editing activities. One activity is designated as 'pretransfer' editing and involves the hydrolysis of activated Val-AMP. The other activity is designated 'posttransfer' editing and involves deacylation of mischarged Val-tRNA(Ile). The chain is Isoleucine--tRNA ligase from Pediococcus pentosaceus (strain ATCC 25745 / CCUG 21536 / LMG 10740 / 183-1w).